The sequence spans 220 residues: Large ribosomal subunit protein uL16 (220 aa).

The protein belongs to the universal ribosomal protein uL16 family. As to quaternary structure, component of the small ribosomal subunit. Mature ribosomes consist of a small (40S) and a large (60S) subunit. The 40S subunit contains about 33 different proteins and 1 molecule of RNA (18S). The 60S subunit contains about 49 different proteins and 3 molecules of RNA (25S, 5.8S and 5S).

In Euphorbia esula (Leafy spurge), this protein is Large ribosomal subunit protein uL16 (RPL10).